The primary structure comprises 83 residues: Toxin AahP985 (83 aa).

An N-terminal signal peptide occupies residues 1 to 18 (MNYLVMISLALLIAGVDS). The LCN-type CS-alpha/beta domain maps to 20-82 (RDAYIAKNDN…VPIKLSGECH (63 aa)). Disulfide bonds link Cys30/Cys81, Cys34/Cys54, Cys40/Cys64, and Cys44/Cys66.

It belongs to the long (4 C-C) scorpion toxin superfamily. Sodium channel inhibitor family. Alpha subfamily. As to expression, expressed by the venom gland.

The protein resides in the secreted. Binds voltage-independently at site-3 of sodium channels (Nav) and inhibits the inactivation of the activated channels, thereby blocking neuronal transmission. The sequence is that of Toxin AahP985 from Androctonus australis (Sahara scorpion).